We begin with the raw amino-acid sequence, 380 residues long: Cytochrome b (380 aa).

The next 4 helical transmembrane spans lie at 34-54, 78-99, 114-134, and 179-199; these read FGSLLGICLVTQILTGLLLAM, WLIRNLHANGASLFFICIYLHI, WNTGVILLLTLMATAFVGYVL, and FFALHFLLPFMIAGLTLIHLT. Heme b-binding residues include H84 and H98. H183 and H197 together coordinate heme b. Position 202 (H202) interacts with a ubiquinone. Transmembrane regions (helical) follow at residues 227-247, 289-309, 321-341, and 348-368; these read LKDFLGFALMLFLLTALALFT, LGGVLALAASVLVLLLVPFLH, LSQTLFWILVSNLFILTWIGS, and FITIGQLASITYFTIILILFP.

The protein belongs to the cytochrome b family. The cytochrome bc1 complex contains 11 subunits: 3 respiratory subunits (MT-CYB, CYC1 and UQCRFS1), 2 core proteins (UQCRC1 and UQCRC2) and 6 low-molecular weight proteins (UQCRH/QCR6, UQCRB/QCR7, UQCRQ/QCR8, UQCR10/QCR9, UQCR11/QCR10 and a cleavage product of UQCRFS1). This cytochrome bc1 complex then forms a dimer. Heme b serves as cofactor.

It is found in the mitochondrion inner membrane. Its function is as follows. Component of the ubiquinol-cytochrome c reductase complex (complex III or cytochrome b-c1 complex) that is part of the mitochondrial respiratory chain. The b-c1 complex mediates electron transfer from ubiquinol to cytochrome c. Contributes to the generation of a proton gradient across the mitochondrial membrane that is then used for ATP synthesis. This is Cytochrome b (MT-CYB) from Coracias caudatus (Lilac-breasted roller).